The sequence spans 312 residues: Methionyl-tRNA formyltransferase (312 aa).

Residue Ser112 to Pro115 coordinates (6S)-5,6,7,8-tetrahydrofolate.

It belongs to the Fmt family.

The catalysed reaction is L-methionyl-tRNA(fMet) + (6R)-10-formyltetrahydrofolate = N-formyl-L-methionyl-tRNA(fMet) + (6S)-5,6,7,8-tetrahydrofolate + H(+). In terms of biological role, attaches a formyl group to the free amino group of methionyl-tRNA(fMet). The formyl group appears to play a dual role in the initiator identity of N-formylmethionyl-tRNA by promoting its recognition by IF2 and preventing the misappropriation of this tRNA by the elongation apparatus. The protein is Methionyl-tRNA formyltransferase of Magnetococcus marinus (strain ATCC BAA-1437 / JCM 17883 / MC-1).